The primary structure comprises 216 residues: FMN-dependent NADH:quinone oxidoreductase 2 (216 aa).

Residues Ser-9, 15 to 17 (SVS), 96 to 99 (MYNF), and 140 to 143 (SRGG) each bind FMN.

This sequence belongs to the azoreductase type 1 family. In terms of assembly, homodimer. The cofactor is FMN.

It catalyses the reaction 2 a quinone + NADH + H(+) = 2 a 1,4-benzosemiquinone + NAD(+). The catalysed reaction is N,N-dimethyl-1,4-phenylenediamine + anthranilate + 2 NAD(+) = 2-(4-dimethylaminophenyl)diazenylbenzoate + 2 NADH + 2 H(+). Quinone reductase that provides resistance to thiol-specific stress caused by electrophilic quinones. In terms of biological role, also exhibits azoreductase activity. Catalyzes the reductive cleavage of the azo bond in aromatic azo compounds to the corresponding amines. The chain is FMN-dependent NADH:quinone oxidoreductase 2 from Xanthomonas euvesicatoria pv. vesicatoria (strain 85-10) (Xanthomonas campestris pv. vesicatoria).